Consider the following 1379-residue polypeptide: DNA-directed RNA polymerase subunit beta (1379 aa).

This sequence belongs to the RNA polymerase beta chain family. As to quaternary structure, the RNAP catalytic core consists of 2 alpha, 1 beta, 1 beta' and 1 omega subunit. When a sigma factor is associated with the core the holoenzyme is formed, which can initiate transcription.

The enzyme catalyses RNA(n) + a ribonucleoside 5'-triphosphate = RNA(n+1) + diphosphate. DNA-dependent RNA polymerase catalyzes the transcription of DNA into RNA using the four ribonucleoside triphosphates as substrates. The chain is DNA-directed RNA polymerase subunit beta from Rhizobium leguminosarum bv. trifolii (strain WSM2304).